The primary structure comprises 490 residues: Tegument protein VP16 (490 aa).

The disordered stretch occupies residues 12-37; the sequence is MDADGASPPPPRPAGGPKNTPAAPPL. Residues Ser18, Ser353, Ser411, and Ser452 each carry the phosphoserine modification. A transcriptional activation region spans residues 411–490; the sequence is STAPPTDVSL…DALGIDEYGG (80 aa).

Belongs to the herpesviridae tegument protein VP16 protein family. As to quaternary structure, interacts with VP22. Interacts with gH (via C-terminus). Interacts with the virion host shutoff protein (vhs). Interacts with VP11/12. Associates with the VP16-induced complex; binding to host HCFC1 activates VP16 for association with the octamer motif-binding host protein POU2F1, to form a multiprotein-DNA complex responsible for activating transcription of the viral immediate early genes.

It localises to the virion tegument. Its subcellular location is the host nucleus. Functionally, transcriptional activator of immediate-early (IE) gene products (alpha genes). Acts as a key activator of lytic infection by initiating the lytic program through the assembly of the transcriptional regulatory VP16-induced complex composed of VP16 and two cellular factors, HCFC1 and POU2F 1. VP16-induced complex represents a regulatory switch: when it is on, it promotes IE-gene expression and thus lytic infection, and when it is off, it limits IE-gene transcription favoring latent infection. May play a role in the aggregation of tegument proteins around nucleocapsids during virus morphogenesis. This Homo sapiens (Human) protein is Tegument protein VP16.